A 232-amino-acid polypeptide reads, in one-letter code: Ubiquinone biosynthesis O-methyltransferase (232 aa).

The S-adenosyl-L-methionine site is built by Arg36, Gly55, Asp76, and Leu120.

Belongs to the methyltransferase superfamily. UbiG/COQ3 family.

The enzyme catalyses a 3-demethylubiquinol + S-adenosyl-L-methionine = a ubiquinol + S-adenosyl-L-homocysteine + H(+). It catalyses the reaction a 3-(all-trans-polyprenyl)benzene-1,2-diol + S-adenosyl-L-methionine = a 2-methoxy-6-(all-trans-polyprenyl)phenol + S-adenosyl-L-homocysteine + H(+). It participates in cofactor biosynthesis; ubiquinone biosynthesis. Functionally, O-methyltransferase that catalyzes the 2 O-methylation steps in the ubiquinone biosynthetic pathway. This is Ubiquinone biosynthesis O-methyltransferase from Pseudomonas fluorescens (strain Pf0-1).